Reading from the N-terminus, the 873-residue chain is Protein translocase subunit SecA (873 aa).

ATP contacts are provided by residues glutamine 88, 106–110, and aspartate 501; that span reads GEGKT. Zn(2+) contacts are provided by cysteine 856, cysteine 858, cysteine 867, and histidine 868.

It belongs to the SecA family. As to quaternary structure, monomer and homodimer. Part of the essential Sec protein translocation apparatus which comprises SecA, SecYEG and auxiliary proteins SecDF-YajC and YidC. The cofactor is Zn(2+).

The protein resides in the cell inner membrane. It is found in the cytoplasm. The catalysed reaction is ATP + H2O + cellular proteinSide 1 = ADP + phosphate + cellular proteinSide 2.. Part of the Sec protein translocase complex. Interacts with the SecYEG preprotein conducting channel. Has a central role in coupling the hydrolysis of ATP to the transfer of proteins into and across the cell membrane, serving both as a receptor for the preprotein-SecB complex and as an ATP-driven molecular motor driving the stepwise translocation of polypeptide chains across the membrane. The sequence is that of Protein translocase subunit SecA from Anaplasma phagocytophilum (strain HZ).